We begin with the raw amino-acid sequence, 213 residues long: Thymidylate kinase (213 aa).

9–16 (GIEGCGKT) is a binding site for ATP.

The protein belongs to the thymidylate kinase family.

The catalysed reaction is dTMP + ATP = dTDP + ADP. In terms of biological role, phosphorylation of dTMP to form dTDP in both de novo and salvage pathways of dTTP synthesis. This is Thymidylate kinase from Geobacter sulfurreducens (strain ATCC 51573 / DSM 12127 / PCA).